An 82-amino-acid chain; its full sequence is Exodeoxyribonuclease 7 small subunit (82 aa).

It belongs to the XseB family. In terms of assembly, heterooligomer composed of large and small subunits.

The protein localises to the cytoplasm. It catalyses the reaction Exonucleolytic cleavage in either 5'- to 3'- or 3'- to 5'-direction to yield nucleoside 5'-phosphates.. Its function is as follows. Bidirectionally degrades single-stranded DNA into large acid-insoluble oligonucleotides, which are then degraded further into small acid-soluble oligonucleotides. The chain is Exodeoxyribonuclease 7 small subunit from Mycobacterium marinum (strain ATCC BAA-535 / M).